The chain runs to 397 residues: L-asparaginase-like protein GM15681 (397 aa).

A signal peptide spans 1–22 (MLAQSCCLRLLILLLLFTSICS). Cystine bridges form between Cys90-Cys95, Cys189-Cys205, and Cys344-Cys371.

This sequence belongs to the Ntn-hydrolase family.

This Drosophila sechellia (Fruit fly) protein is L-asparaginase-like protein GM15681.